A 193-amino-acid chain; its full sequence is Acyl carrier protein phosphodiesterase (193 aa).

This sequence belongs to the AcpH family.

It carries out the reaction holo-[ACP] + H2O = apo-[ACP] + (R)-4'-phosphopantetheine + H(+). Its function is as follows. Converts holo-ACP to apo-ACP by hydrolytic cleavage of the phosphopantetheine prosthetic group from ACP. This Salmonella newport (strain SL254) protein is Acyl carrier protein phosphodiesterase.